The sequence spans 627 residues: Sphingomyelin phosphodiesterase (627 aa).

Positions 1 to 44 (MPHHRASSGQDHLRAGWEQRLERSLPAPRVGLLWMGLGLALVLA) are cleaved as a signal peptide. Residues 83 to 167 (QNLTCPACKV…LLGSSCGHWD (85 aa)) enclose the Saposin B-type domain. N-linked (GlcNAc...) asparagine glycosylation occurs at Asn84. 3 disulfides stabilise this stretch: Cys87–Cys163, Cys90–Cys155, and Cys118–Cys129. A glycan (N-linked (GlcNAc...) asparagine) is linked at Asn173. Zn(2+)-binding residues include Asp204 and His206. Intrachain disulfides connect Cys219–Cys224 and Cys225–Cys248. 2 residues coordinate Zn(2+): Asp276 and Asn316. Asn333 and Asn393 each carry an N-linked (GlcNAc...) asparagine glycan. An intrachain disulfide couples Cys383 to Cys429. The Zn(2+) site is built by His423, His455, and His457. Ser506 is modified (phosphoserine). Asn518 carries an N-linked (GlcNAc...) asparagine glycan. Disulfide bonds link Cys582-Cys586 and Cys592-Cys605. A glycan (N-linked (GlcNAc...) asparagine) is linked at Asn611.

Belongs to the acid sphingomyelinase family. In terms of assembly, monomer. Interacts with SORT1; the interaction is required for SMPD1 targeting to lysosomes. Zn(2+) is required as a cofactor. In terms of processing, proteolytically processed. Mature lysosomal form arises from C-terminal proteolytic processing of pro-sphingomyelin phosphodiesterase. Post-translationally, both lysosomal and secreted forms are glycosylated but they show a differential pattern of glycosylation. Phosphorylated at Ser-506 by PRKCD upon stress stimuli. Phosphorylation is required for secretion. In terms of processing, this form is generated following cleavage by CASP7 in the extracellular milieu. It shows increased activity.

Its subcellular location is the lysosome. It localises to the lipid droplet. The protein resides in the secreted. The protein localises to the extracellular space. It catalyses the reaction a sphingomyelin + H2O = phosphocholine + an N-acylsphing-4-enine + H(+). The enzyme catalyses N-(octadecanoyl)-sphing-4-enine-1-phosphocholine + H2O = N-octadecanoylsphing-4-enine + phosphocholine + H(+). The catalysed reaction is a 1,2-diacyl-sn-glycero-3-phosphocholine + H2O = phosphocholine + a 1,2-diacyl-sn-glycerol + H(+). It carries out the reaction 1,2-dihexadecanoyl-sn-glycero-3-phosphocholine + H2O = 1,2-dihexadecanoyl-sn-glycerol + phosphocholine + H(+). Its activity is regulated as follows. Hydrolysis of liposomal sphingomyelin is stimulated by incorporation of diacylglycerol (DAG), ceramide and free fatty acids into the liposomal membranes. Phosphatidylcholine hydrolysis is inhibited by incorporation of cholesterol, ceramide, DAG, monoacylglycerol and fatty acids. Functionally, converts sphingomyelin to ceramide. Exists as two enzymatic forms that arise from alternative trafficking of a single protein precursor, one that is targeted to the endolysosomal compartment, whereas the other is released extracellularly. However, in response to various forms of stress, lysosomal exocytosis may represent a major source of the secretory form. In terms of biological role, in the lysosomes, converts sphingomyelin to ceramide. Plays an important role in the export of cholesterol from the intraendolysosomal membranes. Also has phospholipase C activities toward 1,2-diacylglycerolphosphocholine and 1,2-diacylglycerolphosphoglycerol. Modulates stress-induced apoptosis through the production of ceramide. Its function is as follows. When secreted, modulates cell signaling with its ability to reorganize the plasma membrane by converting sphingomyelin to ceramide. Secreted form is increased in response to stress and inflammatory mediators such as IL1B, IFNG or TNF as well as upon infection with bacteria and viruses. Produces the release of ceramide in the outer leaflet of the plasma membrane playing a central role in host defense. Ceramide reorganizes these rafts into larger signaling platforms that are required to internalize P.aeruginosa, induce apoptosis and regulate the cytokine response in infected cells. In wounded cells, the lysosomal form is released extracellularly in the presence of Ca(2+) and promotes endocytosis and plasma membrane repair. This form is generated following cleavage by CASP7 in the extracellular milieu in response to bacterial infection. It shows increased ability to convert sphingomyelin to ceramide and promotes plasma membrane repair. Plasma membrane repair by ceramide counteracts the action of gasdermin-D (GSDMD) perforin (PRF1) pores that are formed in response to bacterial infection. Functionally, (Microbial infection) Secretion is activated by bacteria such as P.aeruginosa, this activation results in the release of ceramide in the outer leaflet of the plasma membrane which facilitates the infection. This Mus musculus (Mouse) protein is Sphingomyelin phosphodiesterase.